Consider the following 434-residue polypeptide: MAGEVEGRGCGFSLGVLVTLLVLPLPSLCTLSTEKELHVIKLYEGRMVRYNESRNFCYQRTYEPKWSDVWTKIQIRINSTKMIRVTQVDNEEKLKEMETFNMFDFFSSFLKEKLNDTFIYVNLYSNKTCVKVHLTDTDTYYSVALSRGFDPRLFFVFLCGLLLFFYGDTLSRSQLFFYSTGITVGMLASMLILVFMLSKLMPKKSPFFALLLGGWSVSIYVIQLVFRNLQAICSEYWQYLIVYLGIVGFVSFAFCYIYGPLENERSINILNWTLQLIGLLLMYVSVQIQHIAVTIVVIAFCTKQIEYPVQWIYILYRKIKLKRAKPGPPRLLTEEEYRKQADVETRKALEELRECCSSPDFAAWKTISRIQSPKRFADFVEGSSHLTPNEVSVHEHEYGLGGSFLEDELFGEDSDVEEEMEIEPPLYPIPRSVF.

A signal peptide spans 1–29 (MAGEVEGRGCGFSLGVLVTLLVLPLPSLC). A run of 5 helical transmembrane segments spans residues 151 to 171 (PRLF…DTLS), 175 to 195 (LFFY…ILVF), 206 to 226 (PFFA…QLVF), 239 to 259 (YLIV…YIYG), and 280 to 300 (LLMY…VIAF). Positions 176 to 287 (FFYSTGITVG…GLLLMYVSVQ (112 aa)) are a; required for its colocalization with lamins at the nuclear envelope. Positions 317 to 325 (RKIKLKRAK) match the Nuclear localization signal motif. A b; interaction with ran region spans residues 326–395 (PGPPRLLTEE…LTPNEVSVHE (70 aa)). Positions 326–434 (PGPPRLLTEE…PLYPIPRSVF (109 aa)) are interaction with banf1-a and banf1-b. The segment at 368–375 (SRIQSPKR) is BAF-binding site (BBS); essential for interaction with banf1-a, banf1-b and ran.

Belongs to the NEMP family. In terms of assembly, interacts with banf1-a and banf1-b. Interacts with ran-gtp. Phosphorylated.

The protein localises to the nucleus inner membrane. It is found in the nucleus envelope. In terms of biological role, in concert with ran, required for proper eye development. May be involved in the expression of early eye marker genes. Contributes to nuclear envelope stiffness in germ cells. Required for fertility. Essential for normal erythropoiesis. Required for efficient nuclear envelope opening and enucleation during the late stages of erythroblast maturation. The polypeptide is Nuclear envelope integral membrane protein 1b (nemp1b) (Xenopus laevis (African clawed frog)).